A 202-amino-acid chain; its full sequence is Large ribosomal subunit protein uL4 (202 aa).

The disordered stretch occupies residues 45–71 (HAQKNRSEVSGSGKKPWRQKGTGRARV).

It belongs to the universal ribosomal protein uL4 family. As to quaternary structure, part of the 50S ribosomal subunit.

Functionally, one of the primary rRNA binding proteins, this protein initially binds near the 5'-end of the 23S rRNA. It is important during the early stages of 50S assembly. It makes multiple contacts with different domains of the 23S rRNA in the assembled 50S subunit and ribosome. Its function is as follows. Forms part of the polypeptide exit tunnel. The chain is Large ribosomal subunit protein uL4 from Buchnera aphidicola subsp. Baizongia pistaciae (strain Bp).